Consider the following 185-residue polypeptide: Probable calcium-binding protein CML10 (185 aa).

The interval 1–41 (MVKIKMPALFRRRSGSKSPPLPQADPASGGGSPAPTPEEEM) is disordered. 4 EF-hand domains span residues 36 to 71 (TPEEEMERVFRKFDANGDGRISRSELGALFESLGHA), 72 to 107 (ATDDELARMMAEADADGDGFISLDEFAALNATASGD), 110 to 145 (AVEEDLRHAFRVFDADGNGTISAAELARVLHGLGEK), and 146 to 181 (ATVQQCRRMIEGVDQNGDGLISFEEFKVMMAGGGSF). Residues Asp-49, Asn-51, Asp-53, Arg-55, Glu-60, Asp-85, Asp-87, Asp-89, Glu-96, Asp-123, Asp-125, Asn-127, Thr-129, Glu-134, Asp-159, Asn-161, Asp-163, and Glu-170 each contribute to the Ca(2+) site.

Potential calcium sensor. The protein is Probable calcium-binding protein CML10 (CML10) of Oryza sativa subsp. japonica (Rice).